A 1608-amino-acid chain; its full sequence is Mitogen-activated protein kinase kinase kinase 4 (1608 aa).

Residues 1–23 show a composition bias toward low complexity; that stretch reads MREAAAALVPPPAFAVTPAAAME. Disordered regions lie at residues 1 to 136 and 429 to 478; these read MREA…ENVE and IPSP…RQPI. Residues 24 to 37 show a composition bias toward pro residues; that stretch reads EPPPPPPPPPPPPE. Over residues 66 to 76 the composition is skewed to acidic residues; the sequence is SDLEDFSDETN. At serine 84 the chain carries Phosphoserine. Residues 91–101 are compositionally biased toward basic residues; the sequence is QMKRMSTKHQR. Serine 431 is subject to Phosphoserine. A Phosphothreonine modification is found at threonine 447. Phosphoserine is present on residues serine 456 and serine 457. Residues 456-466 are compositionally biased toward acidic residues; the sequence is SSTDESEEEQI. The residue at position 458 (threonine 458) is a Phosphothreonine. Residues serine 461, serine 481, and serine 499 each carry the phosphoserine modification. Disordered stretches follow at residues 1157–1190, 1202–1231, and 1244–1274; these read CHSDPPNPHLIIPTPEGFSTRSMPSDARSHGSPA, ASRPSPSGGDSVLPKSISSAHDTRGSSVPE, and FRSLSRHSSPTEERDEPAYPRGDSSGSTRRS. Positions 1217 to 1230 are enriched in polar residues; sequence SISSAHDTRGSSVP. 2 positions are modified to phosphoserine: serine 1252 and serine 1274. Basic and acidic residues predominate over residues 1252 to 1261; sequence SPTEERDEPA. One can recognise a Protein kinase domain in the interval 1343-1601; it reads WQRGNKIGEG…ASQLLDHSFV (259 aa). ATP is bound by residues 1349–1357 and lysine 1372; that span reads IGEGQYGKV. Aspartate 1463 serves as the catalytic Proton acceptor.

Belongs to the protein kinase superfamily. STE Ser/Thr protein kinase family. MAP kinase kinase kinase subfamily. In terms of assembly, monomer and homodimer. Homodimerization enhances kinase activity. Interacts with TRAF4; this promotes homodimerization. Binds both upstream activators and downstream substrates in multimolecular complexes. Interacts with AXIN1 and DIXDC1; interaction with DIXDC1 prevents interaction with AXIN1. Interacts with GADD45 and MAP2K6. Interacts with ZFP36; this interaction enhances the association with SH3KBP1/CIN85. Interacts with SH3KBP1; this interaction enhances the association with ZFP36. Interacts with CDC42. Requires Mg(2+) as cofactor. As to expression, expressed at high levels in heart, placenta, skeletal muscle and pancreas, and at lower levels in other tissues.

Its subcellular location is the cytoplasm. The protein resides in the perinuclear region. It carries out the reaction L-seryl-[protein] + ATP = O-phospho-L-seryl-[protein] + ADP + H(+). It catalyses the reaction L-threonyl-[protein] + ATP = O-phospho-L-threonyl-[protein] + ADP + H(+). With respect to regulation, N-terminal autoinhibitory domain interacts with the C-terminal kinase domain, inhibiting kinase activity, and preventing interaction with its substrate, MAP2K6. The GADD45 proteins activate the kinase by binding to the N-terminal domain. Activated by phosphorylation on Thr-1505. In terms of biological role, component of a protein kinase signal transduction cascade. Activates the CSBP2, P38 and JNK MAPK pathways, but not the ERK pathway. Specifically phosphorylates and activates MAP2K4 and MAP2K6. In Homo sapiens (Human), this protein is Mitogen-activated protein kinase kinase kinase 4 (MAP3K4).